The sequence spans 651 residues: A-type voltage-gated potassium channel KCND1 (651 aa).

At 1–183 the chain is on the cytoplasmic side; that stretch reads MAAGVATWLP…RAFENPHTST (183 aa). The interval 2 to 20 is interaction with KCNIP1, KCNIP2, and other family members; sequence AAGVATWLPFARAAAVGWL. H104, C131, and C132 together coordinate Zn(2+). A disordered region spans residues 144-164; the sequence is AERLAEDEEAEQAGEGPALPA. A helical membrane pass occupies residues 184–205; the sequence is AALVFYYVTGFFIAVSVIANVV. Topologically, residues 206 to 230 are extracellular; sequence ETIPCRGTPRWPSKEQSCGDRFPTA. A helical transmembrane segment spans residues 231–252; it reads FFCMDTACVLIFTGEYLLRLFA. Residues 253–263 are Cytoplasmic-facing; the sequence is APSRCRFLRSV. Residues 264–284 traverse the membrane as a helical segment; it reads MSLIDVVAILPYYIGLFVPKN. At 285–287 the chain is on the extracellular side; the sequence is DDV. The helical; Voltage-sensor transmembrane segment at 288–308 threads the bilayer; sequence SGAFVTLRVFRVFRIFKFSRH. Residues 309 to 323 are Cytoplasmic-facing; it reads SQGLRILGYTLKSCA. The segment at 310–323 is S4-S5 linker; sequence QGLRILGYTLKSCA. The chain crosses the membrane as a helical span at residues 324 to 345; the sequence is SELGFLLFSLTMAIIIFATVMF. The Extracellular portion of the chain corresponds to 346-359; sequence YAEKGTSKTNFTSI. A glycan (N-linked (GlcNAc...) asparagine) is linked at N355. Residues 360–371 constitute an intramembrane region (helical); sequence PAAFWYTIVTMT. The short motif at 372-377 is the Selectivity filter element; it reads TLGYGD. The stretch at 372–379 is an intramembrane region; sequence TLGYGDMV. Over 380–386 the chain is Extracellular; sequence PSTIAGK. Residues 387-415 form a helical membrane-spanning segment; the sequence is IFGSICSLSGVLVIALPVPVIVSNFSRIY. Residues 416–651 lie on the Cytoplasmic side of the membrane; the sequence is HQNQRADKRR…LPETVKISSL (236 aa). At S458 the chain carries Phosphoserine. Residues 474 to 489 are required for dendritic targeting; it reads FEQQHHHLLHCLEKTT. S555 is modified (phosphoserine). Disordered regions lie at residues 566-585 and 601-651; these read RRSP…HDSL and IPTP…ISSL. Residues 626–637 are compositionally biased toward polar residues; sequence TPNTTLRNSSLG.

This sequence belongs to the potassium channel family. D (Shal) (TC 1.A.1.2) subfamily. Kv4.1/KCND1 sub-subfamily. In terms of assembly, component of heteromultimeric potassium channels. Identified in potassium channel complexes containing KCND1, KCND2, KCND3, KCNIP1, KCNIP2, KCNIP3, KCNIP4, DPP6 and DPP10.

It is found in the cell membrane. It catalyses the reaction K(+)(in) = K(+)(out). Its function is as follows. A-type voltage-gated potassium channel that mediates transmembrane potassium transport in excitable membranes in the brain. Mediates A-type current I(SA) in suprachiasmatic nucleus (SCN) neurons. Exhibits a low-threshold A-type current with a hyperpolarized steady-state inactivation midpoint and the recovery process was steeply voltage-dependent, with recovery being markedly faster at more negative potentials. May regulates repetitive firing rates in the suprachiasmatic nucleus (SCN) neurons and circadian rhythms in neuronal excitability and behavior. Contributes to the regulation of the circadian rhythm of action potential firing in suprachiasmatic nucleus neurons, which regulates the circadian rhythm of locomotor activity. The regulatory subunit KCNIP1 modulates the kinetics of channel inactivation, increases the current amplitudes and accelerates recovery from inactivation, shifts activation in a depolarizing direction. The regulatory subunit DPP10 decreases the voltage sensitivity of the inactivation channel gating. The polypeptide is A-type voltage-gated potassium channel KCND1 (Mus musculus (Mouse)).